A 162-amino-acid chain; its full sequence is Troponin C, skeletal muscle (162 aa).

4 EF-hand domains span residues 17–52, 53–88, 93–128, and 129–162; these read EMIA…LGQN, PTKE…QMKE, KSEE…TGEH, and VTEE…EGVQ. 18 residues coordinate Ca(2+): aspartate 30, aspartate 32, aspartate 36, glutamate 41, aspartate 66, aspartate 68, serine 70, threonine 72, glutamate 77, aspartate 106, asparagine 108, aspartate 110, glutamate 117, aspartate 142, asparagine 144, aspartate 146, arginine 148, and glutamate 153.

It belongs to the troponin C family.

Functionally, troponin is the central regulatory protein of striated muscle contraction. Tn consists of three components: Tn-I which is the inhibitor of actomyosin ATPase, Tn-T which contains the binding site for tropomyosin and Tn-C. The binding of calcium to Tn-C abolishes the inhibitory action of Tn on actin filaments. This is Troponin C, skeletal muscle (TNNC2) from Meleagris gallopavo (Wild turkey).